A 499-amino-acid polypeptide reads, in one-letter code: T-cell activation inhibitor, mitochondrial (499 aa).

The stretch at L206–R233 forms a coiled coil.

In terms of tissue distribution, expressed in peripheral blood leukocytes, mainly in T-lymphocytes.

Its subcellular location is the mitochondrion. May regulate T-cell apoptosis. The sequence is that of T-cell activation inhibitor, mitochondrial (TCAIM) from Mus musculus (Mouse).